We begin with the raw amino-acid sequence, 175 residues long: RNA pyrophosphohydrolase (175 aa).

Positions 6–149 constitute a Nudix hydrolase domain; that stretch reads GYRPNVGIVI…KRDVYRRVMK (144 aa). Positions 38-59 match the Nudix box motif; it reads GGINPGETPEQAMYRELFEEVG.

Belongs to the Nudix hydrolase family. RppH subfamily. Requires a divalent metal cation as cofactor.

Its function is as follows. Accelerates the degradation of transcripts by removing pyrophosphate from the 5'-end of triphosphorylated RNA, leading to a more labile monophosphorylated state that can stimulate subsequent ribonuclease cleavage. The polypeptide is RNA pyrophosphohydrolase (Yersinia pseudotuberculosis serotype O:1b (strain IP 31758)).